We begin with the raw amino-acid sequence, 315 residues long: Kiwa protein KwaB (315 aa).

Component of antiviral defense system Kiwa, composed of KwaA and KwaB. Expression of Kiwa in E.coli (strain MG1655) confers resistance to phages lambda and SECphi18. This chain is Kiwa protein KwaB, found in Escherichia coli O55:H7 (strain RM12579 / EPEC).